Consider the following 372-residue polypeptide: Coxsackievirus and adenovirus receptor homolog (372 aa).

The first 22 residues, Met-1 to Gly-22, serve as a signal peptide directing secretion. 2 consecutive Ig-like C2-type domains span residues Leu-23–Thr-140 and Pro-130–Thr-234. The Extracellular portion of the chain corresponds to Leu-23–Gly-241. 3 cysteine pairs are disulfide-bonded: Cys-45–Cys-124, Cys-150–Cys-227, and Cys-166–Cys-216. Asn-205 carries an N-linked (GlcNAc...) asparagine glycan. Residues Ile-242 to Phe-262 traverse the membrane as a helical segment. Residues Cys-263–Val-372 are Cytoplasmic-facing. The disordered stretch occupies residues Pro-286–Leu-352. The segment covering Arg-291 to His-317 has biased composition (polar residues). Residues Glu-318 to Pro-336 are compositionally biased toward basic and acidic residues.

In terms of assembly, monomer. Probably homodimer formed by 2 molecules on adjacent cells.

It is found in the cell membrane. It localises to the basolateral cell membrane. The protein resides in the cell junction. The protein localises to the tight junction. Its subcellular location is the adherens junction. Functionally, may function as a homophilic cell adhesion molecule and be essential for tight junction integrity. May also be involved in transepithelial migration of leukocytes through adhesive interactions with jaml. The interaction between both receptors may also mediate the activation of gamma-delta T-cells, a subpopulation of T-cells residing in epithelia and involved in tissue homeostasis and repair. This chain is Coxsackievirus and adenovirus receptor homolog (cxadr), found in Danio rerio (Zebrafish).